Reading from the N-terminus, the 357-residue chain is Enoyl-[acyl-carrier-protein] reductase, mitochondrial (357 aa).

Residues Met-1–Met-19 constitute a mitochondrion transit peptide. An Enoyl reductase (ER) domain is found at Glu-36–Ile-352. Tyr-74 acts as the Proton donor in catalysis. Residues Asn-147, Asn-173–Val-176, Arg-196–Arg-198, Tyr-264–Met-267, Phe-289–Met-291, Lys-349, and Lys-350 contribute to the NADP(+) site.

The protein belongs to the zinc-containing alcohol dehydrogenase family. Quinone oxidoreductase subfamily. Homodimer. In terms of tissue distribution, expressed in the central nervous system.

It is found in the mitochondrion. It carries out the reaction a 2,3-saturated acyl-[ACP] + NADP(+) = a (2E)-enoyl-[ACP] + NADPH + H(+). In terms of biological role, catalyzes the NADPH-dependent reduction of trans-2-enoyl thioesters in mitochondrial fatty acid synthesis (fatty acid synthesis type II). Fatty acid chain elongation in mitochondria uses acyl carrier protein (ACP) as an acyl group carrier, but the enzyme accepts both ACP and CoA thioesters as substrates in vitro. Involved in iron homeostasis; affecting Fe-S cluster assembly and ceramide metabolism. Required for proper morphology and bioenergetic functions of mitochondria. Required for maintenance of neurons, including photoreceptor neurons. This is Enoyl-[acyl-carrier-protein] reductase, mitochondrial from Drosophila melanogaster (Fruit fly).